The chain runs to 659 residues: Protein NEDD1 (659 aa).

WD repeat units follow at residues 1–31 (MQENLRFASSGDDVKIWDASSMTLVDKFNPH), 32–71 (TAPHAISSVCWSSNNNFLVTASSSGDKIVVSSCKCKPVPL), 75–114 (GEGQKQTCVSLNSTSMYLVSGGLNNTVNIWDLKSKRVHRS), 117–156 (DHKDEVTCVTYNWNDCYIASGSLSGEIILHSVTTNLSSTP), 160–200 (GSNQ…PYHN), 204–244 (THKA…LVKT), 246–285 (VADAPLTAVDFMPDGATLAIGSSRGKIYQYDLRMLKSPIK), and 289–332 (AHKT…SAGG). Phosphothreonine; by PLK1 is present on Thr-382. The interval 383–433 (LSKEAESGKNQDFSNFDDSGKSSLGDMFSPVRDDAVVSKGGDESIGKGDGL) is disordered. Ser-411 is subject to Phosphoserine. Basic and acidic residues predominate over residues 413–432 (VRDDAVVSKGGDESIGKGDG). Ser-426 bears the Phosphoserine; by PLK1 mark. Ser-468 and Ser-515 each carry phosphoserine. Residues 508 to 522 (ETGNLNASPSSNQTR) show a composition bias toward polar residues. Residues 508-531 (ETGNLNASPSSNQTRSPEKFEKPE) form a disordered region. Residue Thr-549 is modified to Phosphothreonine; by CDK1. Ser-636 is modified (phosphoserine; by PLK1).

In terms of assembly, interacts with FAM29A. Interacts with HSPA1A and HSPA1B. Interacts with gamma-tubulin in a HSPA1A/B-dependent manner. During mitosis, prior phosphorylation on Thr-549 by CDK1 promotes subsequent phosphorylation by PLK1 on Thr-382, Ser-426 and Ser-636. Phosphorylated NEDD1 can interact with gamma-tubulin for targeting the gamma-tubulin ring complex (gTuRC) to the centrosome, an important step for spindle formation.

The protein localises to the cytoplasm. It localises to the cytoskeleton. It is found in the microtubule organizing center. The protein resides in the centrosome. Its function is as follows. Required for mitosis progression. Promotes the nucleation of microtubules from the spindle. This Bos taurus (Bovine) protein is Protein NEDD1 (NEDD1).